The chain runs to 434 residues: Arrestin domain-containing protein 1 (434 aa).

The segment at 295 to 345 (PGPGSSPGLLSPVVPSAPPQEEAEAVASGPHFSDPVSLSTKSHSQQQPLST) is disordered. The span at 330–342 (VSLSTKSHSQQQP) shows a compositional bias: polar residues. Short sequence motifs (PPxY motif) lie at residues 401–404 (PPEY) and 414–417 (PPSY).

The protein belongs to the arrestin family. In terms of assembly, interacts (via PPxY motifs) with ITCH (via WW domains); the interaction is direct and participates in the recruitment of the ubiquitin-protein ligase ITCH to the NOTCH1 receptor. Interacts with ARRB1 and ARRB2; the interaction is direct. Interacts with TSG101; may recruit TSG101 to the plasma membrane. Interacts (via PPxY motifs) with WWP2 (via WW domains); ubiquitinates ARRDC1. Interacts with SLC11A2; controls the incorporation of SLC11A2 into extracellular vesicles through an ubiquitination-dependent mechanism. Interacts with WWP1 (via WW domains). Interacts with NEDD4 (via WW domains). Interacts with PDCD6IP. Ubiquitinated. Ubiquitination by WWP2; promotes localization to extracellular microvesicles. Ubiquitinated by WWP1.

It is found in the cell membrane. Functions as an adapter recruiting ubiquitin-protein ligases to their specific substrates. Through an ubiquitination-dependent mechanism plays for instance a role in the incorporation of SLC11A2 into extracellular vesicles. More generally, plays a role in the extracellular transport of proteins between cells through the release in the extracellular space of microvesicles. By participating in the ITCH-mediated ubiquitination and subsequent degradation of NOTCH1, negatively regulates the NOTCH signaling pathway. The polypeptide is Arrestin domain-containing protein 1 (Rattus norvegicus (Rat)).